Consider the following 451-residue polypeptide: tRNA modification GTPase MnmE (451 aa).

(6S)-5-formyl-5,6,7,8-tetrahydrofolate is bound by residues arginine 28, glutamate 85, and lysine 124. A TrmE-type G domain is found at 220–373; sequence GLYTVLVGPP…LKTRLRTLLL (154 aa). Position 230 (asparagine 230) interacts with K(+). GTP-binding positions include 230 to 235, 249 to 255, and 274 to 277; these read NVGKSS, TDVPGTT, and DTAG. Serine 234 provides a ligand contact to Mg(2+). Residues threonine 249, valine 251, and threonine 254 each contribute to the K(+) site. Threonine 255 contributes to the Mg(2+) binding site. Lysine 451 lines the (6S)-5-formyl-5,6,7,8-tetrahydrofolate pocket.

This sequence belongs to the TRAFAC class TrmE-Era-EngA-EngB-Septin-like GTPase superfamily. TrmE GTPase family. In terms of assembly, homodimer. Heterotetramer of two MnmE and two MnmG subunits. It depends on K(+) as a cofactor.

The protein resides in the cytoplasm. In terms of biological role, exhibits a very high intrinsic GTPase hydrolysis rate. Involved in the addition of a carboxymethylaminomethyl (cmnm) group at the wobble position (U34) of certain tRNAs, forming tRNA-cmnm(5)s(2)U34. This chain is tRNA modification GTPase MnmE, found in Xylella fastidiosa (strain 9a5c).